We begin with the raw amino-acid sequence, 347 residues long: Phosphoribosylformylglycinamidine cyclo-ligase (347 aa).

This sequence belongs to the AIR synthase family.

The protein resides in the cytoplasm. It carries out the reaction 2-formamido-N(1)-(5-O-phospho-beta-D-ribosyl)acetamidine + ATP = 5-amino-1-(5-phospho-beta-D-ribosyl)imidazole + ADP + phosphate + H(+). The protein operates within purine metabolism; IMP biosynthesis via de novo pathway; 5-amino-1-(5-phospho-D-ribosyl)imidazole from N(2)-formyl-N(1)-(5-phospho-D-ribosyl)glycinamide: step 2/2. The chain is Phosphoribosylformylglycinamidine cyclo-ligase from Prochlorococcus marinus (strain AS9601).